Reading from the N-terminus, the 285-residue chain is Bifunctional protein FolD (285 aa).

Residues 165-167 (GRG), Thr-192, and Val-233 each bind NADP(+).

It belongs to the tetrahydrofolate dehydrogenase/cyclohydrolase family. In terms of assembly, homodimer.

The catalysed reaction is (6R)-5,10-methylene-5,6,7,8-tetrahydrofolate + NADP(+) = (6R)-5,10-methenyltetrahydrofolate + NADPH. The enzyme catalyses (6R)-5,10-methenyltetrahydrofolate + H2O = (6R)-10-formyltetrahydrofolate + H(+). Its pathway is one-carbon metabolism; tetrahydrofolate interconversion. In terms of biological role, catalyzes the oxidation of 5,10-methylenetetrahydrofolate to 5,10-methenyltetrahydrofolate and then the hydrolysis of 5,10-methenyltetrahydrofolate to 10-formyltetrahydrofolate. This chain is Bifunctional protein FolD, found in Mycobacterium sp. (strain MCS).